The sequence spans 428 residues: Phosphoribosylamine--glycine ligase (428 aa).

Residues 107 to 313 enclose the ATP-grasp domain; that stretch reads KQVMKTYNIP…LVNVIESLLD (207 aa). 133–194 serves as a coordination point for ATP; sequence VEAEGVPIVI…EEYLEGEELS (62 aa). Residues Glu283 and Asn285 each contribute to the Mg(2+) site.

This sequence belongs to the GARS family. The cofactor is Mg(2+). Mn(2+) is required as a cofactor.

The enzyme catalyses 5-phospho-beta-D-ribosylamine + glycine + ATP = N(1)-(5-phospho-beta-D-ribosyl)glycinamide + ADP + phosphate + H(+). It participates in purine metabolism; IMP biosynthesis via de novo pathway; N(1)-(5-phospho-D-ribosyl)glycinamide from 5-phospho-alpha-D-ribose 1-diphosphate: step 2/2. This Halalkalibacterium halodurans (strain ATCC BAA-125 / DSM 18197 / FERM 7344 / JCM 9153 / C-125) (Bacillus halodurans) protein is Phosphoribosylamine--glycine ligase.